A 547-amino-acid polypeptide reads, in one-letter code: Chaperonin GroEL (547 aa).

ATP is bound by residues 30 to 33 (TLGP), Lys51, 87 to 91 (DGTTT), Gly415, 479 to 481 (NAA), and Asp495. Positions 524–547 (APKKDEPTPPAAGGGMGGMGGMDF) are disordered. The span at 535 to 547 (AGGGMGGMGGMDF) shows a compositional bias: gly residues.

It belongs to the chaperonin (HSP60) family. In terms of assembly, forms a cylinder of 14 subunits composed of two heptameric rings stacked back-to-back. Interacts with the co-chaperonin GroES.

It is found in the cytoplasm. The catalysed reaction is ATP + H2O + a folded polypeptide = ADP + phosphate + an unfolded polypeptide.. In terms of biological role, together with its co-chaperonin GroES, plays an essential role in assisting protein folding. The GroEL-GroES system forms a nano-cage that allows encapsulation of the non-native substrate proteins and provides a physical environment optimized to promote and accelerate protein folding. The polypeptide is Chaperonin GroEL (Xylella fastidiosa (strain M23)).